We begin with the raw amino-acid sequence, 502 residues long: 1-aminocyclopropane-1-carboxylate synthase-like protein 1 (502 aa).

Residues 1 to 24 (MFCLPQQESTAPTTCTGSASTQDM) form a disordered region. Residue Glu-106 participates in substrate binding. Position 324 is an N6-(pyridoxal phosphate)lysine (Lys-324).

Belongs to the class-I pyridoxal-phosphate-dependent aminotransferase family.

In terms of biological role, does not catalyze the synthesis of 1-aminocyclopropane-1-carboxylate but is capable of catalyzing the deamination of L-vinylglycine. The sequence is that of 1-aminocyclopropane-1-carboxylate synthase-like protein 1 (Accs) from Mus musculus (Mouse).